The following is a 479-amino-acid chain: MAQGAQRKNFGHNQILRPSAAYTPVDEQEVLQILDRHRGQRIRAVGRLHSWSEAVTGDGVLLDLQRLNDVRLQSDGDQLVATVGAGCQIKRLLKELNREGATLHSLGLITAQTIAGAISTGTHGSGRNSMSHYVVGVRLACYDASTGQAIIEELSAGEPLQAARCSLGSLGIILAVRIRCREQYNVQEHFTESRRLLDVMDAEAPFPLQQFYLLPWRWSYFIQHRREDDRPRSRLARLYRLYWLGTMDYGLILQILFLERVARSRRLIRLAFRRIIPAFLIRNWRVTDRSSSMLVMRHDAFRHIEIELFVRRDQLADALGFTQEVIKIAGGRESALSADNQRRIEELGMQEALAGLHDQYCHHFPICVRRVLPDDTLISMASGAGEDWYALSFISYAKPARRAGFSLFASFMARSMSRLFHARPHWGKVCPLEADELTSLYPRFDAFRTVCNTLDPQGVFQNDWTTALLEADGQVGDFP.

Positions 14-183 (QILRPSAAYT…LAVRIRCREQ (170 aa)) constitute an FAD-binding PCMH-type domain. Histidine 49 bears the Pros-8alpha-FAD histidine mark. Residues threonine 113, glycine 116, 120–123 (TGTH), and isoleucine 173 each bind FAD. Residues 241–258 (LYWLGTMDYGLILQILFL) form a helical membrane-spanning segment. Residues arginine 369 and histidine 425 each contribute to the FAD site.

The protein belongs to the oxygen-dependent FAD-linked oxidoreductase family. FAD is required as a cofactor.

The protein resides in the cell membrane. It carries out the reaction a long-chain primary fatty alcohol + O2 = a long-chain fatty aldehyde + H2O2. The enzyme catalyses dodecan-1-ol + O2 = dodecanal + H2O2. It catalyses the reaction tetradecan-1-ol + O2 = tetradecanal + H2O2. The catalysed reaction is octan-1-ol + O2 = octanal + H2O2. It carries out the reaction decan-1-ol + O2 = decanal + H2O2. The protein operates within lipid metabolism; fatty acid metabolism. In terms of biological role, in vitro catalyzes the oxidation of a range of fatty alcohols having a carbon chain length of six and above, with a reduction of O2 to H2O2. Shows the highest activity with 1-dodecanol. Is likely involved in lipid metabolism. The sequence is that of Long-chain alcohol oxidase from Uncultured marine euryarchaeote.